The following is a 132-amino-acid chain: Putative holo-[acyl-carrier-protein] synthase (132 aa).

Mg(2+) is bound by residues Asp-6 and Glu-67.

It belongs to the P-Pant transferase superfamily. AcpS family.

It carries out the reaction apo-[ACP] + CoA = holo-[ACP] + adenosine 3',5'-bisphosphate + H(+). In terms of biological role, transfers the 4'-phosphopantetheine moiety from coenzyme A to a Ser of acyl-carrier-protein. This chain is Putative holo-[acyl-carrier-protein] synthase (new8), found in Schizosaccharomyces pombe (strain 972 / ATCC 24843) (Fission yeast).